The primary structure comprises 194 residues: uncharacterized protein (194 aa).

Positions 2 to 62 (QGPRERMVVS…CEAVDYAGEH (61 aa)) constitute an HTH tetR-type domain. The segment at residues 25–44 (AISDVLQHSGAPRGSAYHYF) is a DNA-binding region (H-T-H motif).

This is an uncharacterized protein from Mycobacterium tuberculosis (strain CDC 1551 / Oshkosh).